Reading from the N-terminus, the 851-residue chain is MDRSSASRPDLYLIADNDSVYEQDLLRNPGTIKPWLAYIEYKQQNGTLYEQAFVGRPLDALIISILNDFQVMERACKQLPRSYKLWKMYLEFRTKHLKNRNAIKYRAEFQKVNTLFERALILLNKMPRIWEMYLTFMLQQPLVTQTRRTFDRALRALPVTQHNRIWKLYKTFARSASGQTAVKIWARYMQIHPENAEEYINLLVEMGHYTDAIKRYMEILDNPRFQSREGKSNFQLWTEMVDLLVSKAKKIETGPQTGIDVDAILRSGIDRFADQRGKLWAGLATYWITKGNFEKARDVFEEGITTVMTVRDFTLIFDSYVEFEESIIGSLMEAAAVRADNGKADEEADFDLDLRMLRFEQLMDRRPFLVNDVLLRQNPNNVIEWEKRVALWGDNNVEIVNTYTAAIAAINPKKAVGKFSELWVNYAKFYERGGDLDTARIIFEKAVKVPFKSVNELAETWCEWAEMELRSENFDKAVEIMAKATQAPKKSTVDYFDETLSPQQRIHKSWKLWSFYVDLVESVSSIEETKKVYERIFELRIATPQTVVNYANLLEEHKYFEESFKVYERGLDLFTYPVAFELWNLYLTKAVDRKIGIERLRDLFEQALDGCPPKFARPLYLMYGNLEEERGLARHAMRIYERATRAVSDEDRFEMFEFYITKSASNFGLPSTRPIYERAIAALPDHEAKEMCLKFAEMERRLGEIDRARAIYGHASQFCDPRTNAPFWQKWEAFEVQHGNEDTFKEMLRIKRSVQAQYNTDVNFIASQAIARSQQRAPEGEEATAAAEREMDTETTDAMAALERQARAPIGFVAASTGPEGGNRAPPAGQGPVAAPANPDAIDLDDDMEAD.

HAT repeat units lie at residues 12–44, 63–95, 107–139, 141–175, 291–326, 398–432, 434–470, 487–519, 558–592, 595–629, 667–701, and 703–737; these read YLIADNDSVYEQDLLRNPGTIKPWLAYIEYKQQ, ISILNDFQVMERACKQLPRSYKLWKMYLEFRTK, AEFQKVNTLFERALILLNKMPRIWEMYLTFMLQ, PLVTQTRRTFDRALRALPVTQHNRIWKLYKTFARS, GNFEKARDVFEEGITTVMTVRDFTLIFDSYVEFEES, EIVNTYTAAIAAINPKKAVGKFSELWVNYAKFYER, GDLDTARIIFEKAVKVPFKSVNELAETWCEWAEMELR, APKKSTVDYFDETLSPQQRIHKSWKLWSFYVDL, KYFEESFKVYERGLDLFTYPVAFELWNLYLTKAVD, IGIERLRDLFEQALDGCPPKFARPLYLMYGNLEEE, FGLPSTRPIYERAIAALPDHEAKEMCLKFAEMERR, and GEIDRARAIYGHASQFCDPRTNAPFWQKWEAFEVQ. 2 disordered regions span residues 771 to 793 and 810 to 851; these read ARSQQRAPEGEEATAAAEREMDT and IGFV…MEAD. The span at 825–841 shows a compositional bias: low complexity; sequence APPAGQGPVAAPANPDA. Over residues 842 to 851 the composition is skewed to acidic residues; the sequence is IDLDDDMEAD.

It belongs to the crooked-neck family. As to quaternary structure, associated with the spliceosome.

Its subcellular location is the nucleus. Its function is as follows. Involved in pre-mRNA splicing and cell cycle progression. The protein is Pre-mRNA-splicing factor syf1 (syf1) of Emericella nidulans (strain FGSC A4 / ATCC 38163 / CBS 112.46 / NRRL 194 / M139) (Aspergillus nidulans).